The following is a 275-amino-acid chain: 2,3,4,5-tetrahydropyridine-2,6-dicarboxylate N-succinyltransferase (275 aa).

Substrate-binding residues include arginine 106 and aspartate 143.

This sequence belongs to the transferase hexapeptide repeat family. Homotrimer.

Its subcellular location is the cytoplasm. It catalyses the reaction (S)-2,3,4,5-tetrahydrodipicolinate + succinyl-CoA + H2O = (S)-2-succinylamino-6-oxoheptanedioate + CoA. It participates in amino-acid biosynthesis; L-lysine biosynthesis via DAP pathway; LL-2,6-diaminopimelate from (S)-tetrahydrodipicolinate (succinylase route): step 1/3. The protein is 2,3,4,5-tetrahydropyridine-2,6-dicarboxylate N-succinyltransferase of Rickettsia bellii (strain RML369-C).